We begin with the raw amino-acid sequence, 414 residues long: Alanine--glyoxylate aminotransferase (414 aa).

Residues M1–M23 constitute a mitochondrion transit peptide. K231 is modified (N6-(pyridoxal phosphate)lysine). K247 is subject to N6-acetyllysine; alternate. K247 carries the post-translational modification N6-succinyllysine; alternate. K256 carries the post-translational modification N6-acetyllysine. K330 bears the N6-acetyllysine; alternate mark. K330 is modified (N6-succinyllysine; alternate). K334 is subject to N6-acetyllysine. R382 provides a ligand contact to substrate. Positions N412 to L414 match the Microbody targeting signal motif.

Belongs to the class-V pyridoxal-phosphate-dependent aminotransferase family. As to quaternary structure, homodimer. Pyridoxal 5'-phosphate serves as cofactor.

The protein resides in the peroxisome. The protein localises to the mitochondrion matrix. The enzyme catalyses L-serine + pyruvate = 3-hydroxypyruvate + L-alanine. It catalyses the reaction glyoxylate + L-alanine = glycine + pyruvate. In terms of biological role, catalyzes the transamination of glyoxylate to glycine and contributes to the glyoxylate detoxification. Functionally, catalyzes the transamination between L-serine and pyruvate and weakly contributes to gluconeogenesis from the L-serine metabolism. This is Alanine--glyoxylate aminotransferase from Mus musculus (Mouse).